The chain runs to 194 residues: FMN-dependent NADH:quinone oxidoreductase (194 aa).

FMN contacts are provided by residues S9, 15-17 (SIS), and 85-88 (MYNF).

It belongs to the azoreductase type 1 family. Homodimer. FMN serves as cofactor.

It catalyses the reaction 2 a quinone + NADH + H(+) = 2 a 1,4-benzosemiquinone + NAD(+). The catalysed reaction is N,N-dimethyl-1,4-phenylenediamine + anthranilate + 2 NAD(+) = 2-(4-dimethylaminophenyl)diazenylbenzoate + 2 NADH + 2 H(+). Its function is as follows. Quinone reductase that provides resistance to thiol-specific stress caused by electrophilic quinones. In terms of biological role, also exhibits azoreductase activity. Catalyzes the reductive cleavage of the azo bond in aromatic azo compounds to the corresponding amines. The protein is FMN-dependent NADH:quinone oxidoreductase of Xanthomonas oryzae pv. oryzae (strain KACC10331 / KXO85).